The following is a 982-amino-acid chain: Mineralocorticoid receptor (982 aa).

The interval 1-601 (METKGYHSLP…STGSSRPSKI (601 aa)) is modulating. Positions 230–242 (QGTPLTCSPNVEN) are enriched in polar residues. Disordered regions lie at residues 230–328 (QGTP…AAST) and 345–375 (SGTS…PFPK). Phosphoserine occurs at positions 249, 258, 282, 286, and 298. Positions 258–299 (SPLSSPLSSMKSSISSPPSHCSVKSPVSSPNNVTPRSSVSSP) are enriched in low complexity. A compositionally biased stretch (polar residues) spans 300–328 (ANINNSRCSVSSPSNTNNRSTLSSPAAST). Positions 345–354 (SGTSAGSSTS) are enriched in low complexity. 8 residues coordinate Zn(2+): cysteine 602, cysteine 605, cysteine 619, cysteine 622, cysteine 638, cysteine 644, cysteine 654, and cysteine 657. NR C4-type zinc fingers lie at residues 602 to 622 (CLVC…CGSC) and 638 to 662 (CAGR…LQKC). The nuclear receptor DNA-binding region spans 602–667 (CLVCGDEASG…RLQKCLQAGM (66 aa)). The segment at 668 to 723 (NLGARRSKKLGKLKGIHEEQPQQQPPPPPPPPQSPEEGTTYIAPAKEPSVNTALVP) is hinge. The segment at 682–708 (GIHEEQPQQQPPPPPPPPQSPEEGTTY) is disordered. The span at 690 to 701 (QQPPPPPPPPQS) shows a compositional bias: pro residues. Positions 724-962 (QLSAISRALT…EFPAMLVEII (239 aa)) constitute an NR LBD domain. The 21-hydroxyprogesterone site is built by asparagine 768 and glutamine 774. Aldosterone contacts are provided by asparagine 768 and glutamine 774. Progesterone-binding residues include asparagine 768 and glutamine 774. The interval 780–783 (KWAK) is important for coactivator binding. The 21-hydroxyprogesterone site is built by arginine 815 and threonine 943. Residues arginine 815 and threonine 943 each contribute to the aldosterone site. The progesterone site is built by arginine 815 and threonine 943.

This sequence belongs to the nuclear hormone receptor family. NR3 subfamily. Phosphorylated. As to expression, expressed in hippocampus, being restricted to the more superficial cortical layers.

The protein localises to the cytoplasm. Its subcellular location is the nucleus. Its function is as follows. Receptor for both mineralocorticoids (MC) such as aldosterone and glucocorticoids (GC) such as corticosterone or cortisol. Binds to mineralocorticoid response elements (MRE) and transactivates target genes. The effect of MC is to increase ion and water transport and thus raise extracellular fluid volume and blood pressure and lower potassium levels. In Saimiri sciureus (Common squirrel monkey), this protein is Mineralocorticoid receptor (NR3C2).